The sequence spans 246 residues: Small ribosomal subunit protein uS2 (246 aa).

Belongs to the universal ribosomal protein uS2 family.

The protein is Small ribosomal subunit protein uS2 of Burkholderia cenocepacia (strain ATCC BAA-245 / DSM 16553 / LMG 16656 / NCTC 13227 / J2315 / CF5610) (Burkholderia cepacia (strain J2315)).